The chain runs to 260 residues: Alpha-acetolactate decarboxylase (260 aa).

The protein belongs to the alpha-acetolactate decarboxylase family.

It catalyses the reaction (2S)-2-acetolactate + H(+) = (R)-acetoin + CO2. Its pathway is polyol metabolism; (R,R)-butane-2,3-diol biosynthesis; (R,R)-butane-2,3-diol from pyruvate: step 2/3. Its function is as follows. Converts acetolactate into acetoin. This chain is Alpha-acetolactate decarboxylase (budA), found in Methylococcus capsulatus (strain ATCC 33009 / NCIMB 11132 / Bath).